The chain runs to 81 residues: Small ribosomal subunit protein bS18 (81 aa).

This sequence belongs to the bacterial ribosomal protein bS18 family. Part of the 30S ribosomal subunit. Forms a tight heterodimer with protein bS6.

Its function is as follows. Binds as a heterodimer with protein bS6 to the central domain of the 16S rRNA, where it helps stabilize the platform of the 30S subunit. This Chlamydia trachomatis serovar L2 (strain ATCC VR-902B / DSM 19102 / 434/Bu) protein is Small ribosomal subunit protein bS18.